A 315-amino-acid chain; its full sequence is Prephenate dehydratase (315 aa).

The Prephenate dehydratase domain occupies 3-189 (RIAYLGPEGT…ARTRFLLIGV (187 aa)). Residues 203–280 (SAVLRIANVP…ADVRYLGSWP (78 aa)) form the ACT domain.

As to quaternary structure, homodimer.

It catalyses the reaction prephenate + H(+) = 3-phenylpyruvate + CO2 + H2O. It functions in the pathway amino-acid biosynthesis; L-phenylalanine biosynthesis; phenylpyruvate from prephenate: step 1/1. The chain is Prephenate dehydratase (pheA) from Mycobacterium ulcerans (strain Agy99).